The following is a 373-amino-acid chain: 3-isopropylmalate dehydrogenase (373 aa).

82 to 93 is an NAD(+) binding site; it reads GPKWGTGAVRPE. Residues Arg-100, Arg-110, Arg-139, and Asp-231 each coordinate substrate. Asp-231 and Asp-260 together coordinate Mg(2+). Position 295–306 (295–306) interacts with NAD(+); it reads GSAPDLPENKVN.

Belongs to the isocitrate and isopropylmalate dehydrogenases family. As to quaternary structure, homodimer. It depends on Mg(2+) as a cofactor. Mn(2+) serves as cofactor.

The protein resides in the cytoplasm. It catalyses the reaction (2R,3S)-3-isopropylmalate + NAD(+) = 4-methyl-2-oxopentanoate + CO2 + NADH. The protein operates within amino-acid biosynthesis; L-leucine biosynthesis; L-leucine from 3-methyl-2-oxobutanoate: step 3/4. Functionally, catalyzes the oxidation of 3-carboxy-2-hydroxy-4-methylpentanoate (3-isopropylmalate) to 3-carboxy-4-methyl-2-oxopentanoate. The product decarboxylates to 4-methyl-2 oxopentanoate. The protein is 3-isopropylmalate dehydrogenase (LEU2) of Scheffersomyces stipitis (strain ATCC 58785 / CBS 6054 / NBRC 10063 / NRRL Y-11545) (Yeast).